The primary structure comprises 214 residues: RNA pyrophosphohydrolase (214 aa).

The Nudix hydrolase domain occupies Gly6–Thr149. Residues Gly38–Gly59 carry the Nudix box motif.

Belongs to the Nudix hydrolase family. RppH subfamily. It depends on a divalent metal cation as a cofactor.

Accelerates the degradation of transcripts by removing pyrophosphate from the 5'-end of triphosphorylated RNA, leading to a more labile monophosphorylated state that can stimulate subsequent ribonuclease cleavage. The sequence is that of RNA pyrophosphohydrolase from Burkholderia cenocepacia (strain HI2424).